A 142-amino-acid chain; its full sequence is Ribosome maturation factor RimP (142 aa).

The protein belongs to the RimP family.

It localises to the cytoplasm. Its function is as follows. Required for maturation of 30S ribosomal subunits. The sequence is that of Ribosome maturation factor RimP from Aromatoleum aromaticum (strain DSM 19018 / LMG 30748 / EbN1) (Azoarcus sp. (strain EbN1)).